The primary structure comprises 314 residues: MAAITEMATDSNDVINDGGTGDGIEKSTDSKPEIESDDLKPKSKPEYDQMKKLVAMFKKLNPEAKEFFPSYKRNTNQSDDFVIAIKPSGEDNKKVAINRRRRNNYNQGRRVRLPGRASKAQREDSIRRTVYVSDIDQSVTEEGLAGLFSSCGQVVDCRICGDPNSVLRFAFVEFSDDQGARSALSLGGTMIGYYPVRVLPSKTAILPVNPTFLPRSEDEREMCSRTIYCTNVDKNATEDDVNTFFQSACGEVTRLRLLGDQVHSTRIAFVEFAMAESAVAALNCSGIVLGSQPIRVSPSKTPVRSRITRSPSPN.

The interval 1 to 47 (MAAITEMATDSNDVINDGGTGDGIEKSTDSKPEIESDDLKPKSKPEY) is disordered. Over residues 23 to 47 (GIEKSTDSKPEIESDDLKPKSKPEY) the composition is skewed to basic and acidic residues. The PAM2-like motif lies at 59-69 (KLNPEAKEFFP). Positions 99-112 (RRRRNNYNQGRRVR) match the Bipartite nuclear localization signal motif. 2 consecutive RRM domains span residues 128–203 (RTVY…PSKT) and 225–301 (RTIY…PSKT).

In terms of assembly, interacts with MPC. Expressed in cauline leaves, stems, rosette leaves, immature siliques and primary inflorescences but at a low level.

The protein resides in the nucleus. This Arabidopsis thaliana (Mouse-ear cress) protein is Polyadenylate-binding protein-interacting protein 8 (CID8).